Here is a 509-residue protein sequence, read N- to C-terminus: ATP synthase subunit alpha (509 aa).

ATP is bound at residue 169 to 176 (GDRQTGKT).

This sequence belongs to the ATPase alpha/beta chains family. As to quaternary structure, F-type ATPases have 2 components, CF(1) - the catalytic core - and CF(0) - the membrane proton channel. CF(1) has five subunits: alpha(3), beta(3), gamma(1), delta(1), epsilon(1). CF(0) has three main subunits: a(1), b(2) and c(9-12). The alpha and beta chains form an alternating ring which encloses part of the gamma chain. CF(1) is attached to CF(0) by a central stalk formed by the gamma and epsilon chains, while a peripheral stalk is formed by the delta and b chains.

It localises to the cell inner membrane. The catalysed reaction is ATP + H2O + 4 H(+)(in) = ADP + phosphate + 5 H(+)(out). In terms of biological role, produces ATP from ADP in the presence of a proton gradient across the membrane. The alpha chain is a regulatory subunit. The polypeptide is ATP synthase subunit alpha (Brucella anthropi (strain ATCC 49188 / DSM 6882 / CCUG 24695 / JCM 21032 / LMG 3331 / NBRC 15819 / NCTC 12168 / Alc 37) (Ochrobactrum anthropi)).